The sequence spans 395 residues: Zinc finger protein 200 (395 aa).

Residues 157–208 (VNGSNPEGEDPEREPVENEDYREKSSDDDEMDSSLVSQQPPDNQEKERLNTS) are disordered. Positions 169-181 (REPVENEDYREKS) are enriched in basic and acidic residues. The tract at residues 246–395 (RRTRRWYTCP…HSACKTRKQK (150 aa)) is interaction with PRMT3. 5 consecutive C2H2-type zinc fingers follow at residues 252–274 (YTCPLCGKQFNESSYLISHQRTH), 280–302 (YDCNHCGKSFNHKTNLNKHERIH), 308–330 (YSCSQCGKNFRQNSHRSRHEGIH), 336–358 (FKCPECGKTFPKNEEFVLHLQSH), and 364–386 (YGCKKCGRRFGRLSNCTRHEKTH).

In terms of assembly, interacts (via C-terminus) with PRMT3 (via zinc-finger); the interaction is direct and required to localize protein arginine N-methyltransferase PRMT3 to the nucleus and inhibit its proteasomal degradation. In terms of tissue distribution, highly expressed in testis, weakly expressed in spleen, thymus, prostate, ovary, small intestine colon and peripheral blood leukocytes.

The protein resides in the nucleus. Its function is as follows. Localizes protein arginine N-methyltransferase PRMT3 to the nucleus. The sequence is that of Zinc finger protein 200 (ZNF200) from Homo sapiens (Human).